Here is a 662-residue protein sequence, read N- to C-terminus: Transforming growth factor beta activator LRRC32 (662 aa).

An N-terminal signal peptide occupies residues 1–17 (MRPQILLLLALLTLGLA). Residues 18–625 (AQRQDKVPCK…EDCEKGGLKN (608 aa)) are Extracellular-facing. An LRRNT domain is found at 21-48 (QDKVPCKMVDKKVSCQGLGLLQVPSVLP). LRR repeat units follow at residues 50–73 (DTET…GFYT), 74–95 (ALRH…AFQA), 98–119 (HLEH…SAGG), 125–145 (RVTS…ERLL), 150–171 (SLHT…TFRD), 174–195 (VLEQ…AFEG), 198–219 (RLTH…SLQQ), 220–240 (LRVL…SQPQ), 244–265 (QLTW…AALP), and 266–286 (RLIY…PPQD). Residue Asn-203 is glycosylated (N-linked (GlcNAc...) asparagine). 2 N-linked (GlcNAc...) asparagine glycosylation sites follow: Asn-271 and Asn-308. LRR repeat units lie at residues 316 to 339 (QLLN…EHLT), 340 to 361 (SLCF…RSGS), 364 to 385 (CLML…ARAL), 387 to 408 (SLRT…TFAN), 411 to 432 (SLQR…DEPG), 444 to 465 (SLHS…AFLH), 467 to 488 (PLTE…ALGG), 492 to 513 (SLEV…LPCF), 515 to 536 (CLKR…TQAV), and 537 to 558 (SLEV…AMGG). Asn-345 carries an N-linked (GlcNAc...) asparagine glycan. Asn-545 is a glycosylation site (N-linked (GlcNAc...) asparagine). In terms of domain architecture, LRRCT spans 571-620 (NPLSCCGNGWLAAQLHQGRVDVDATQDLICRFSSQEEVSLSHVRPEDCEK). The helical transmembrane segment at 626-646 (INLIIILTFILVSAILLTTLA) threads the bilayer. The Cytoplasmic segment spans residues 647 to 662 (TCCCVRRQKFNQQYKA).

This sequence belongs to the LRRC32/LRRC33 family. As to quaternary structure, interacts with TGFB1; associates via disulfide bonds with the Latency-associated peptide chain (LAP) regulatory chain of TGFB1, leading to regulate activation of TGF-beta-1. Interacts with TGFB2. Interacts with TGFB3; associates via disulfide bonds with the Latency-associated peptide chain (LAP) regulatory chain of TGFB3, leading to regulate activation of TGF-beta-3. Interacts with LAPTM4B; decreases TGFB1 production in regulatory T-cells.

It is found in the cell membrane. It localises to the cell surface. Functionally, key regulator of transforming growth factor beta (TGFB1, TGFB2 and TGFB3) that controls TGF-beta activation by maintaining it in a latent state during storage in extracellular space. Associates specifically via disulfide bonds with the Latency-associated peptide (LAP), which is the regulatory chain of TGF-beta, and regulates integrin-dependent activation of TGF-beta. Able to outcompete LTBP1 for binding to LAP regulatory chain of TGF-beta. Controls activation of TGF-beta-1 (TGFB1) on the surface of activated regulatory T-cells (Tregs). Required for epithelial fusion during palate development by regulating activation of TGF-beta-3 (TGFB3). The polypeptide is Transforming growth factor beta activator LRRC32 (Pongo abelii (Sumatran orangutan)).